The following is a 203-amino-acid chain: Meiotically up-regulated protein PB17E12.09 (203 aa).

Positions 92–177 (CNRKIEGYIK…KEMQLYMTKI (86 aa)) form a coiled coil.

It localises to the cytoplasm. Its function is as follows. Has a role in meiosis and sporulation. The sequence is that of Meiotically up-regulated protein PB17E12.09 from Schizosaccharomyces pombe (strain 972 / ATCC 24843) (Fission yeast).